Consider the following 219-residue polypeptide: Small ribosomal subunit protein uS3c (219 aa).

Residues 39–109 (IRQYIEKNLS…QIRINVIEVK (71 aa)) enclose the KH type-2 domain.

The protein belongs to the universal ribosomal protein uS3 family. Part of the 30S ribosomal subunit.

It localises to the plastid. It is found in the cyanelle. The protein is Small ribosomal subunit protein uS3c (rps3) of Cyanophora paradoxa.